Consider the following 77-residue polypeptide: Large ribosomal subunit protein bL28 (77 aa).

Belongs to the bacterial ribosomal protein bL28 family.

In Polynucleobacter asymbioticus (strain DSM 18221 / CIP 109841 / QLW-P1DMWA-1) (Polynucleobacter necessarius subsp. asymbioticus), this protein is Large ribosomal subunit protein bL28.